We begin with the raw amino-acid sequence, 352 residues long: Thiosulfate transporter TsuA (352 aa).

Residues Met1–Arg21 form a helical membrane-spanning segment. Residues Gly22–Ala44 lie on the Cytoplasmic side of the membrane. A helical transmembrane segment spans residues Leu45–Leu65. Topologically, residues Thr66–Gly70 are periplasmic. Residues Ala71–Ala91 form a helical membrane-spanning segment. Over Gly92 to Ala102 the chain is Cytoplasmic. Residues Gly103–Met123 form a helical membrane-spanning segment. Residues Arg124–Thr148 are Periplasmic-facing. A helical membrane pass occupies residues Phe149 to Met169. The Cytoplasmic portion of the chain corresponds to Lys170–Arg197. The chain crosses the membrane as a helical span at residues Trp198 to Ser218. Residues Glu219 to Tyr247 are Periplasmic-facing. Residues Ile248–Ala268 form a helical membrane-spanning segment. Topologically, residues Ser269–Gly289 are cytoplasmic. A helical membrane pass occupies residues Val290–Met310. Residues Thr311 to Gln317 are Periplasmic-facing. A helical transmembrane segment spans residues Gly318–Val338. Residues Arg339–Asn352 lie on the Cytoplasmic side of the membrane.

This sequence belongs to the TsuA/YedE (TC 9.B.102) family.

It is found in the cell inner membrane. The enzyme catalyses thiosulfate(in) = thiosulfate(out). Mediates thiosulfate uptake. This is Thiosulfate transporter TsuA from Escherichia coli (strain K12).